Reading from the N-terminus, the 334-residue chain is Sterol 4-C-methyltransferase strm-1 (334 aa).

Belongs to the class I-like SAM-binding methyltransferase superfamily. Erg6/SMT family. In terms of tissue distribution, expressed in the pharynx and hypodermal syncytium.

The enzyme catalyses 5alpha-cholest-7-en-3-one + S-adenosyl-L-methionine = 4alpha-methyl-5alpha-cholest-7-en-3-one + S-adenosyl-L-homocysteine + H(+). The protein operates within steroid hormone biosynthesis; dafachronic acid biosynthesis. Functionally, catalyzes the methyl transfer from S-adenosyl-methionine to the C-4 of the A-ring sterols such as lathosterone (5alpha-cholest-7-en-3-one) thereby rendering them unsuitable as ligand precursors. May irreversibly shunt sterols away from hormone dafachronic acid production. Dafachronic acids act as ligands and bind directly to the nuclear hormone receptor (NHR) daf-12 suppressing dauer formation and inducing reproductive growth. By reducing the biosynthesis of dafachronic acids, this methyltransferase can regulate dauer larva formation. The chain is Sterol 4-C-methyltransferase strm-1 (strm-1) from Caenorhabditis elegans.